The following is a 956-amino-acid chain: uncharacterized protein (956 aa).

The stretch at 918-942 (NSINEAIEKLNEAADAYQAIIDQQK) forms a coiled coil.

This is an uncharacterized protein from Acanthamoeba polyphaga (Amoeba).